The chain runs to 94 residues: DNA-directed RNA polymerase subunit omega (94 aa).

Belongs to the RNA polymerase subunit omega family. Consists of a sigma factor and the RNAP core enzyme which is composed of 2 alpha chains, 1 beta chain, 1 beta' chain and 1 subunit omega.

It catalyses the reaction RNA(n) + a ribonucleoside 5'-triphosphate = RNA(n+1) + diphosphate. Promotes RNA polymerase assembly. Latches the N- and C-terminal regions of the beta' subunit thereby facilitating its interaction with the beta and alpha subunits. The chain is DNA-directed RNA polymerase subunit omega from Shewanella violacea (strain JCM 10179 / CIP 106290 / LMG 19151 / DSS12).